Consider the following 484-residue polypeptide: Protein arginine methyltransferase NDUFAF7 homolog, mitochondrial (484 aa).

The N-terminal 12 residues, 1 to 12 (MFRSITQRVIRN), are a transit peptide targeting the mitochondrion.

Belongs to the NDUFAF7 family. In terms of assembly, homodimer. Interacts with ndufs2.

The protein localises to the mitochondrion. It catalyses the reaction L-arginyl-[protein] + 2 S-adenosyl-L-methionine = N(omega),N(omega)'-dimethyl-L-arginyl-[protein] + 2 S-adenosyl-L-homocysteine + 2 H(+). Its function is as follows. Involved in the assembly or stability of mitochondrial NADH:ubiquinone oxidoreductase complex (complex I). Acts as an arginine methyltransferase and probably acts by mediating arginine methylation of ndufs2. This chain is Protein arginine methyltransferase NDUFAF7 homolog, mitochondrial, found in Dictyostelium discoideum (Social amoeba).